Reading from the N-terminus, the 309-residue chain is Methionyl-tRNA formyltransferase (309 aa).

107–110 (SLLP) serves as a coordination point for (6S)-5,6,7,8-tetrahydrofolate.

This sequence belongs to the Fmt family.

It carries out the reaction L-methionyl-tRNA(fMet) + (6R)-10-formyltetrahydrofolate = N-formyl-L-methionyl-tRNA(fMet) + (6S)-5,6,7,8-tetrahydrofolate + H(+). In terms of biological role, attaches a formyl group to the free amino group of methionyl-tRNA(fMet). The formyl group appears to play a dual role in the initiator identity of N-formylmethionyl-tRNA by promoting its recognition by IF2 and preventing the misappropriation of this tRNA by the elongation apparatus. The polypeptide is Methionyl-tRNA formyltransferase (Borrelia hermsii (strain HS1 / DAH)).